The primary structure comprises 337 residues: RNA 3'-terminal phosphate cyclase (337 aa).

ATP contacts are provided by residues Gln-101 and 282 to 285; that span reads HMSD. His-306 functions as the Tele-AMP-histidine intermediate in the catalytic mechanism.

This sequence belongs to the RNA 3'-terminal cyclase family. Type 1 subfamily.

Its subcellular location is the cytoplasm. It catalyses the reaction a 3'-end 3'-phospho-ribonucleotide-RNA + ATP = a 3'-end 2',3'-cyclophospho-ribonucleotide-RNA + AMP + diphosphate. Functionally, catalyzes the conversion of 3'-phosphate to a 2',3'-cyclic phosphodiester at the end of RNA. The mechanism of action of the enzyme occurs in 3 steps: (A) adenylation of the enzyme by ATP; (B) transfer of adenylate to an RNA-N3'P to produce RNA-N3'PP5'A; (C) and attack of the adjacent 2'-hydroxyl on the 3'-phosphorus in the diester linkage to produce the cyclic end product. The biological role of this enzyme is unknown but it is likely to function in some aspects of cellular RNA processing. The polypeptide is RNA 3'-terminal phosphate cyclase (Saccharolobus islandicus (strain M.16.27) (Sulfolobus islandicus)).